Consider the following 163-residue polypeptide: Mating-type protein ALPHA2 (163 aa).

Residues isoleucine 80–threonine 142 constitute a DNA-binding region (homeobox; TALE-type).

The protein belongs to the TALE/M-ATYP homeobox family.

The protein localises to the nucleus. Functionally, mating type proteins are sequence specific DNA-binding proteins that act as master switches in yeast differentiation by controlling gene expression in a cell type-specific fashion. This is Mating-type protein ALPHA2 (MATALPHA2) from Pichia angusta (Yeast).